A 385-amino-acid polypeptide reads, in one-letter code: Isomaltose glucohydrolase (385 aa).

Trp125 provides a ligand contact to substrate. Asp175 functions as the Proton acceptor in the catalytic mechanism. Glu178 acts as the Proton donor in catalysis. Catalysis depends on Glu335, which acts as the Proton acceptor.

This sequence belongs to the glycosyl hydrolase 15 family.

It is found in the cytoplasm. The catalysed reaction is isomaltose + H2O = beta-D-glucose + D-glucose. Its function is as follows. Involved in the intracellular degradation of the cyclic tetrasaccharide cyclobis-(1-6)-alpha-nigerosyl (CNN) formed extracellularly from starch. Catalyzes the hydrolysis of alpha-1,6-glucosidic linkage from the non-reducing end of isomaltose to yield beta-D-glucose and D-glucose. Can also act on panose and isomaltotriose at a lower rate. It displays low or no activity toward CNN and the general GH15 enzyme substrates such as maltose, soluble starch or dextran. The protein is Isomaltose glucohydrolase of Kribbella flavida (strain DSM 17836 / JCM 10339 / NBRC 14399).